Here is a 689-residue protein sequence, read N- to C-terminus: Transcription factor MYC2 (689 aa).

Residues 94-172 form a JAZ-interaction domain region; that stretch reads LQQRLQALID…VLRELNSLIS (79 aa). Residues 316-349 show a composition bias toward polar residues; that stretch reads NTVQTNSVPSSNSNKQIAYGNENNHPSGNGQSCY. 2 disordered regions span residues 316–361 and 420–519; these read NTVQ…PQQQ and QSQF…EAER. Over residues 350 to 361 the composition is skewed to low complexity; it reads NQQQQKNPPQQQ. The span at 471–495 shows a compositional bias: basic and acidic residues; sequence DSEHSDLEASVVKEADSSRVVEPEK. Over residues 496 to 505 the composition is skewed to basic residues; it reads RPRKRGRKPA. Over residues 506-519 the composition is skewed to basic and acidic residues; that stretch reads NGREEPLNHVEAER. Residues 509-522 form a basic motif; degenerate region; it reads EEPLNHVEAERQRR. The bHLH domain maps to 509–558; it reads EEPLNHVEAERQRREKLNQRFYALRAVVPNVSKMDKASLLGDAISYINEL. Residues 523–558 are helix-loop-helix motif; the sequence is EKLNQRFYALRAVVPNVSKMDKASLLGDAISYINEL. The segment at 563–602 is disordered; it reads QNTESDKEDLKSQIEDLKKESRRPGPPPPPNQDLKMSSHT. The segment covering 566–585 has biased composition (basic and acidic residues); that stretch reads ESDKEDLKSQIEDLKKESRR.

As to quaternary structure, interacts (via N-terminus) with MED25. Interacts (via N-terminus) with JAZ7. MED25 and JAZ7 compete with each other to bind to MYC2. Interacts (via N-terminus) with MTB1. MTB1 and MED25 compete with each other to bind to MYC2. In terms of tissue distribution, expressed at low levels in roots, stems, leaves, flowers and fruits.

The protein resides in the nucleus. In terms of biological role, transcriptional activator that binds to the G-box motif (5'-AACGTG-3') found in the promoter of the jasmonate-induced gene LAPA1. Acts as a negative regulator of blue light-mediated photomorphogenesis and positively regulates root growth. Promotes growth in response to the phytohormones abscisic acid (ABA) and jasmonate (JA). Binds to the G-box motif (5'-CACGTG-3') of the RBCS-3A gene promoter. Acts downstream of the jasmonate (JA) receptor to orchestrate JA-mediated activation of plant responses. Positively regulates both wound-responsive and pathogen-responsive genes through MYC2-targeted transcription factors (MTFs) involved in early response to JA. With JA2L forms a transcription module that regulates wounding-responsive genes. With ERF.C3 forms a transcription module that regulates pathogen-responsive genes. Plays a critical role in orchestrating JA-mediated defense gene expression during Botrytis cinerea infection. Negatively regulates defense responses to root-knot nematodes, potentially by mediating crosstalk among the hormones strigolactones, abscisic acid (ABA) and jasmonate (JA). Regulates the termination of JA-mediated defense responses by specifically binding the G-box (5'-CACATG-3') motifs in the promoters of MTB1, MTB2 and MTB3, which are transcription factors that negatively regulates JA signaling. May be involved in JA-induced chilling tolerance, possibly by ameliorating the antioxidant enzyme system of fruit and increasing proline and lycopene levels. The chain is Transcription factor MYC2 from Solanum lycopersicum (Tomato).